A 78-amino-acid chain; its full sequence is UPF0335 protein RBE_1185 (78 aa).

It belongs to the UPF0335 family.

In Rickettsia bellii (strain RML369-C), this protein is UPF0335 protein RBE_1185.